Consider the following 226-residue polypeptide: Phosphoheptose isomerase (226 aa).

The SIS domain occupies 50-212 (IAGVFETGGK…ERMMGYGTEC (163 aa)). 65 to 67 (NGG) contributes to the substrate binding site. Residues His74 and Glu78 each contribute to the Zn(2+) site. Residues Glu78, 109 to 110 (ND), 135 to 137 (STS), Ser140, and Gln188 each bind substrate. Residues Gln188 and His196 each coordinate Zn(2+).

The protein belongs to the SIS family. GmhA subfamily. The cofactor is Zn(2+).

Its subcellular location is the cytoplasm. The enzyme catalyses 2 D-sedoheptulose 7-phosphate = D-glycero-alpha-D-manno-heptose 7-phosphate + D-glycero-beta-D-manno-heptose 7-phosphate. Its pathway is carbohydrate biosynthesis; D-glycero-D-manno-heptose 7-phosphate biosynthesis; D-glycero-alpha-D-manno-heptose 7-phosphate and D-glycero-beta-D-manno-heptose 7-phosphate from sedoheptulose 7-phosphate: step 1/1. In terms of biological role, catalyzes the isomerization of sedoheptulose 7-phosphate in D-glycero-D-manno-heptose 7-phosphate. This is Phosphoheptose isomerase from Chlorobium phaeobacteroides (strain DSM 266 / SMG 266 / 2430).